We begin with the raw amino-acid sequence, 239 residues long: Prolactin-8A4 (239 aa).

The first 31 residues, 1–31 (MMKLALSQPPFSGTLLMLVVSILLLWEKAAS), serve as a signal peptide directing secretion. 2 cysteine pairs are disulfide-bonded: C35/C42 and C102/C215. N-linked (GlcNAc...) asparagine glycans are attached at residues N211 and N218. A disulfide bridge connects residues C232 and C239.

Belongs to the somatotropin/prolactin family. In terms of tissue distribution, placental basal zone cells.

The protein resides in the secreted. The chain is Prolactin-8A4 (Prl8a4) from Rattus norvegicus (Rat).